The primary structure comprises 395 residues: RNA polymerase II elongation factor ELL3 (395 aa).

Disordered regions lie at residues 124-149 (SSLQ…DYPE), 163-182 (VPDP…SREH), 194-218 (LPNR…KRPA), and 233-279 (LAPS…SLSP). Basic and acidic residues predominate over residues 130–140 (NRTEDARDRES). Positions 168-177 (ASSQGQSLPG) are enriched in polar residues. Over residues 246-258 (LQEEDWEQEDKDE) the composition is skewed to acidic residues. Residues 268 to 277 (PSVQADSESL) are compositionally biased toward polar residues. The region spanning 283–393 (PDYLLQYRAI…LILEFEEKNR (111 aa)) is the OCEL domain.

Belongs to the ELL/occludin family. As to quaternary structure, interacts with AFF4. Component of the super elongation complex (SEC), at least composed of EAF1, EAF2, CDK9, MLLT3/AF9, AFF (AFF1 or AFF4), the P-TEFb complex and ELL (ELL, ELL2 or ELL3). Component of the little elongation complex (LEC), at least composed of ELL (ELL, ELL2 or ELL3), ZC3H8, ICE1 and ICE2.

It localises to the nucleus. Functionally, enhancer-binding elongation factor that specifically binds enhancers in embryonic stem cells (ES cells), marks them, and is required for their future activation during stem cell specification. Elongation factor component of the super elongation complex (SEC), a complex required to increase the catalytic rate of RNA polymerase II transcription by suppressing transient pausing by the polymerase at multiple sites along the DNA. Component of the little elongation complex (LEC), a complex required to regulate small nuclear RNA (snRNA) gene transcription by RNA polymerase II and III. Does not only bind to enhancer regions of active genes, but also marks the enhancers that are in a poised or inactive state in ES cells and is required for establishing proper RNA polymerase II occupancy at developmentally regulated genes in a cohesin-dependent manner. Probably required for priming developmentally regulated genes for later recruitment of the super elongation complex (SEC), for transcriptional activation during differentiation. Required for recruitment of P-TEFb within SEC during differentiation. Probably preloaded on germ cell chromatin, suggesting that it may prime gene activation by marking enhancers as early as in the germ cells. Promoting epithelial-mesenchymal transition (EMT). This Bos taurus (Bovine) protein is RNA polymerase II elongation factor ELL3 (ELL3).